The following is a 285-amino-acid chain: Energy-coupling factor transporter ATP-binding protein EcfA2 (285 aa).

The ABC transporter domain occupies 6–242 (LKVEELNYNY…KEVIRKVNLR (237 aa)). Residue 39–46 (GGNGVGKS) coordinates ATP.

Belongs to the ABC transporter superfamily. Energy-coupling factor EcfA family. As to quaternary structure, forms a stable energy-coupling factor (ECF) transporter complex composed of 2 membrane-embedded substrate-binding proteins (S component), 2 ATP-binding proteins (A component) and 2 transmembrane proteins (T component).

The protein resides in the cell membrane. Its function is as follows. ATP-binding (A) component of a common energy-coupling factor (ECF) ABC-transporter complex. Unlike classic ABC transporters this ECF transporter provides the energy necessary to transport a number of different substrates. The polypeptide is Energy-coupling factor transporter ATP-binding protein EcfA2 (Clostridium perfringens (strain SM101 / Type A)).